The primary structure comprises 266 residues: Interleukin-1 beta (266 aa).

Positions 1 to 113 (MAPVPEPINE…ETSSDEFLCD (113 aa)) are excised as a propeptide.

The protein belongs to the IL-1 family. As to quaternary structure, monomer. In its precursor form, weakly interacts with full-length MEFV; the mature cytokine does not interact at all. Interacts with integrins ITGAV:ITGBV and ITGA5:ITGB1; integrin-binding is required for IL1B signaling. Interacts with cargo receptor TMED10; the interaction is direct and is required for the secretion of IL1B mature form. Interacts with HSP90AB1; the interaction facilitates cargo translocation into the ERGIC. Interacts with HSP90B1; the interaction facilitates cargo translocation into the ERGIC.

It is found in the cytoplasm. Its subcellular location is the cytosol. It localises to the secreted. The protein localises to the lysosome. The protein resides in the extracellular exosome. In terms of biological role, potent pro-inflammatory cytokine. Initially discovered as the major endogenous pyrogen, induces prostaglandin synthesis, neutrophil influx and activation, T-cell activation and cytokine production, B-cell activation and antibody production, and fibroblast proliferation and collagen production. Promotes Th17 differentiation of T-cells. Synergizes with IL12/interleukin-12 to induce IFNG synthesis from T-helper 1 (Th1) cells. Plays a role in angiogenesis by inducing VEGF production synergistically with TNF and IL6. Involved in transduction of inflammation downstream of pyroptosis: its mature form is specifically released in the extracellular milieu by passing through the gasdermin-D (GSDMD) pore. The sequence is that of Interleukin-1 beta (IL1B) from Cervus elaphus (Red deer).